A 144-amino-acid chain; its full sequence is Large ribosomal subunit protein uL15 (144 aa).

The interval 1–60 (MKMNTLKPAEGSKQSPKRLGRGIGSGLGKTGGRGHKGQTSRSGGTIRPGFEGGQQPLQRR) is disordered. The segment covering 21–31 (RGIGSGLGKTG) has biased composition (gly residues).

It belongs to the universal ribosomal protein uL15 family. Part of the 50S ribosomal subunit.

Its function is as follows. Binds to the 23S rRNA. This is Large ribosomal subunit protein uL15 from Hahella chejuensis (strain KCTC 2396).